Reading from the N-terminus, the 348-residue chain is UDP-N-acetyl-alpha-D-glucosaminouronate 4-epimerase (348 aa).

Residues phenylalanine 26, isoleucine 27, aspartate 46, threonine 50, glycine 51, aspartate 77, isoleucine 78, glutamine 97, tyrosine 165, lysine 169, and valine 195 each coordinate NAD(+). Residue tyrosine 165 is the Proton acceptor of the active site.

The protein belongs to the NAD(P)-dependent epimerase/dehydratase family. In terms of assembly, homodimer. NAD(+) is required as a cofactor.

The enzyme catalyses UDP-2-acetamido-2-deoxy-alpha-D-glucuronate = UDP-2-acetamido-2-deoxy-alpha-D-galacturonate. The catalysed reaction is UDP-N-acetyl-alpha-D-glucosamine = UDP-N-acetyl-alpha-D-galactosamine. The protein operates within capsule biogenesis; capsule polysaccharide biosynthesis. It functions in the pathway glycan metabolism; Vi-antigen biosynthesis. Its function is as follows. Epimerase required for the biosynthesis of the capsular polysaccharide, commonly referred as the Vi antigen, an important virulence factor. Catalyzes the reversible epimerization of UDP-N-acetylglucosaminuronic acid (UDP-GlcNAcA) to UDP-N-acetylgalactosaminuronic acid (UDP-GalNAcA). Also catalyzes, with lower efficiency, the reversible epimerization of UDP-N-acetylglucosamine (UDP-GlcNAc) to UDP-N-acetylgalactosamine (UDP-GalNAc). Cannot use UDP-glucose (UDP-Glc) and UDP-galactose (UDP-Gal) as substrates. The sequence is that of UDP-N-acetyl-alpha-D-glucosaminouronate 4-epimerase from Salmonella typhi.